A 1154-amino-acid chain; its full sequence is uncharacterized protein (1154 aa).

A signal peptide spans 1–18 (MKRNIFIKLLISLLLLSS). Cys19 carries the N-palmitoyl cysteine lipid modification. Residue Cys19 is the site of S-diacylglycerol cysteine attachment. A run of 4 helical transmembrane segments spans residues 288-308 (ISVSAILTLYIMFTGLSFLIG), 394-414 (LGFIYIILYLIALYFIFFLIF), 423-443 (ALITIGMMIIMGPIFICFMLF), and 458-478 (ISYALQPIILFAGIAFISMII).

Belongs to the TrbL/VirB6 family.

Its subcellular location is the cell membrane. This is an uncharacterized protein from Rickettsia typhi (strain ATCC VR-144 / Wilmington).